Consider the following 1960-residue polypeptide: [F-actin]-monooxygenase MICAL3 (1960 aa).

A monooxygenase domain region spans residues 2 to 494 (EESKNEATNR…RHLYDTGDTK (493 aa)). FAD is bound by residues Cys97, 116-118 (EKR), 123-125 (RNN), Phe183, Tyr298, and Asp398. Residues 518–624 (VARSSKLLGW…YLTQFYEMFK (107 aa)) form the Calponin-homology (CH) domain. The residue at position 649 (Ser649) is a Phosphoserine. The disordered stretch occupies residues 658 to 704 (GQTISRKRSPKDKKEKDLDGAGKRRKTSQSEEEDTPRGHRGARPTLV). Over residues 669–679 (DKKEKDLDGAG) the composition is skewed to basic and acidic residues. Residues Ser685 and Ser687 each carry the phosphoserine modification. Residues 762-824 (DTCYFCQKRV…KPHYCYRLSG (63 aa)) enclose the LIM zinc-binding domain. Positions 764, 767, 785, 788, 791, 794, 814, and 817 each coordinate Zn(2+). Disordered regions lie at residues 826–887 (AQRK…LRGT) and 906–1295 (LEEV…EALK). Thr887 carries the post-translational modification Phosphothreonine. Ser971 carries the post-translational modification Phosphoserine. Residues 984 to 1014 (GEEEEEDEEDEEEEEEEEDEEDEEEDEDESS) show a composition bias toward acidic residues. Composition is skewed to basic and acidic residues over residues 1039–1051 (HWTH…EERA) and 1072–1084 (DVDS…KGEA). Phosphoserine is present on residues Ser1129, Ser1139, Ser1156, and Ser1188. Pro residues-rich tracts occupy residues 1192-1203 (SPLPEPSTPPAE) and 1217-1233 (RTPP…PPTQ). Ser1250 is subject to Phosphoserine. Position 1252 is a phosphothreonine (Thr1252). Ser1254, Ser1286, and Ser1313 each carry phosphoserine. A compositionally biased stretch (polar residues) spans 1277 to 1286 (QGVTKDTLGS). Disordered stretches follow at residues 1316-1550 (LTPV…KRGL) and 1564-1782 (RMRA…EEEL). The residue at position 1317 (Thr1317) is a Phosphothreonine. Basic and acidic residues predominate over residues 1379 to 1393 (PDREPKGPREEHRDL). Low complexity predominate over residues 1394-1406 (SSSSGLGLQGSSS). Phosphoserine is present on Ser1404. Polar residues predominate over residues 1407–1425 (RTRTPGSQSFNTSDSTMLT). Residue Thr1425 is modified to Phosphothreonine. The segment covering 1485-1503 (SVDEIPFADDVEDTYDDNT) has biased composition (acidic residues). Residues 1594-1611 (AAAAPRTPRTPAPRRATA) show a composition bias toward low complexity. The segment covering 1616-1627 (GPEEPAPRHEAT) has biased composition (basic and acidic residues). The span at 1633–1653 (SPPSDSGGPDGSVTSSEGSSG) shows a compositional bias: low complexity. A compositionally biased stretch (basic residues) spans 1654 to 1672 (KSKKRSSLFSPRRSKKEKK). Ser1660 and Ser1663 each carry phosphoserine. The segment covering 1718–1727 (CPSTPSSGTT) has biased composition (polar residues). The span at 1762 to 1778 (VLERTSQKSRKEPRTYT) shows a compositional bias: basic and acidic residues. The stretch at 1779–1952 (EEELNAKLTR…DKDLEAAMLS (174 aa)) forms a coiled coil. The bMERB domain occupies 1799-1948 (KQEELKRLHR…EKEEDKDLEA (150 aa)). Ser1870 is modified (phosphoserine).

It belongs to the Mical family. As to quaternary structure, interacts with RAB1B, RAB8A, RAB10, RAB13 and RAB15 (in their GTP-bound forms); binding to RAB1B is of low affinity compared to other Rab proteins; at least in case of RAB8A can bind 2 molecules of RAB8A simultaneously through a high and a low affinity binding site, respectively. Interacts with ERC1 and RAB8A; may bridge ERC1 with RAB8A. Interacts with KIF23 and ERC1; enhances the interaction between KIF23 and ERC1. Interacts with NINL. The cofactor is FAD.

It localises to the cytoplasm. The protein resides in the cell cortex. It is found in the cytoskeleton. Its subcellular location is the nucleus. The protein localises to the midbody. It localises to the spindle. The protein resides in the cilium basal body. The catalysed reaction is L-methionyl-[F-actin] + NADPH + O2 + H(+) = L-methionyl-(R)-S-oxide-[F-actin] + NADP(+) + H2O. Monooxygenase that promotes depolymerization of F-actin by mediating oxidation of specific methionine residues on actin to form methionine-sulfoxide, resulting in actin filament disassembly and preventing repolymerization. In the absence of actin, it also functions as a NADPH oxidase producing H(2)O(2). Seems to act as Rab effector protein and play a role in vesicle trafficking. Involved in exocytic vesicles tethering and fusion: the monooxygenase activity is required for this process and implicates RAB8A associated with exocytotic vesicles. Required for cytokinesis. Contributes to stabilization and/or maturation of the intercellular bridge independently of its monooxygenase activity. Promotes recruitment of Rab8 and ERC1 to the intercellular bridge, and together these proteins are proposed to function in timely abscission. This is [F-actin]-monooxygenase MICAL3 (MICAL3) from Bos taurus (Bovine).